Consider the following 236-residue polypeptide: 1-(5-phosphoribosyl)-5-[(5-phosphoribosylamino)methylideneamino] imidazole-4-carboxamide isomerase (236 aa).

D8 (proton acceptor) is an active-site residue. The active-site Proton donor is the D129.

This sequence belongs to the HisA/HisF family.

It localises to the cytoplasm. The enzyme catalyses 1-(5-phospho-beta-D-ribosyl)-5-[(5-phospho-beta-D-ribosylamino)methylideneamino]imidazole-4-carboxamide = 5-[(5-phospho-1-deoxy-D-ribulos-1-ylimino)methylamino]-1-(5-phospho-beta-D-ribosyl)imidazole-4-carboxamide. Its pathway is amino-acid biosynthesis; L-histidine biosynthesis; L-histidine from 5-phospho-alpha-D-ribose 1-diphosphate: step 4/9. The protein is 1-(5-phosphoribosyl)-5-[(5-phosphoribosylamino)methylideneamino] imidazole-4-carboxamide isomerase of Methanospirillum hungatei JF-1 (strain ATCC 27890 / DSM 864 / NBRC 100397 / JF-1).